The sequence spans 654 residues: Mitochondrial-processing peptidase subunit alpha-1 (654 aa).

The interval 73-94 (SSSSYKGNNNNNNKLSYTTSSN) is disordered. Residues 381-446 (HKNHLKSQLQ…EQLELQQVKE (66 aa)) adopt a coiled-coil conformation.

It belongs to the peptidase M16 family. Heterodimer of alpha and beta subunits, forming the mitochondrial processing protease (MPP) in which subunit alpha is involved in substrate recognition and binding and subunit beta is the catalytic subunit.

It is found in the mitochondrion matrix. Its function is as follows. Substrate recognition and binding subunit of the essential mitochondrial processing protease (MPP), which cleaves the mitochondrial sequence off newly imported precursors proteins. This chain is Mitochondrial-processing peptidase subunit alpha-1 (mppA1), found in Dictyostelium discoideum (Social amoeba).